Reading from the N-terminus, the 736-residue chain is Oligopeptide transporter 6 (736 aa).

Transmembrane regions (helical) follow at residues 43 to 63 (MWVL…FFWY), 66 to 86 (MPLS…GHLM), 116 to 136 (VLIT…HILS), 148 to 168 (FLPA…WAGL), 210 to 230 (FFLI…YLFT), 258 to 278 (LGIG…GSPL), 288 to 308 (VAIG…WLNI), 357 to 377 (FFAV…VHVL), 412 to 432 (VPLW…MFIS), 443 to 463 (WWGV…IGVI), 489 to 511 (PVAN…TFIS), 527 to 547 (FMAQ…TAWW), 602 to 622 (WFFL…KMFP), 645 to 665 (ATAV…HFIF), and 678 to 698 (VLSG…FLAL).

The protein belongs to the oligopeptide OPT transporter (TC 2.A.67.1) family. In terms of tissue distribution, expressed in flowers and roots, and at a low level in leaves and stems. Detected in the cambial zone of the vascular bundles and in the region of lateral root initiation. Low expression in the vascular network of the petals and high in the stamen filaments and the gynoecium.

The protein localises to the membrane. Involved in the translocation of tetra- and pentapeptides across the cellular membrane in an energy-dependent manner. Also involved in transport of glutathione derivatives and metal complexes, and may be involved in stress resistance. The polypeptide is Oligopeptide transporter 6 (OPT6) (Arabidopsis thaliana (Mouse-ear cress)).